The chain runs to 417 residues: NADH-quinone oxidoreductase subunit D (417 aa).

Belongs to the complex I 49 kDa subunit family. NDH-1 is composed of 14 different subunits. Subunits NuoB, C, D, E, F, and G constitute the peripheral sector of the complex.

The protein localises to the cell inner membrane. The catalysed reaction is a quinone + NADH + 5 H(+)(in) = a quinol + NAD(+) + 4 H(+)(out). Functionally, NDH-1 shuttles electrons from NADH, via FMN and iron-sulfur (Fe-S) centers, to quinones in the respiratory chain. The immediate electron acceptor for the enzyme in this species is believed to be ubiquinone. Couples the redox reaction to proton translocation (for every two electrons transferred, four hydrogen ions are translocated across the cytoplasmic membrane), and thus conserves the redox energy in a proton gradient. The sequence is that of NADH-quinone oxidoreductase subunit D from Polynucleobacter necessarius subsp. necessarius (strain STIR1).